The following is a 348-amino-acid chain: Heat-inducible transcription repressor HrcA (348 aa).

This sequence belongs to the HrcA family.

Negative regulator of class I heat shock genes (grpE-dnaK-dnaJ and groELS operons). Prevents heat-shock induction of these operons. The protein is Heat-inducible transcription repressor HrcA of Ruminiclostridium cellulolyticum (strain ATCC 35319 / DSM 5812 / JCM 6584 / H10) (Clostridium cellulolyticum).